Here is a 288-residue protein sequence, read N- to C-terminus: Alpha/beta hydrolase domain-containing protein 17B (288 aa).

Residues S170, D235, and H264 each act as charge relay system in the active site.

Belongs to the AB hydrolase superfamily. ABHD17 family. Palmitoylated on cysteine residues located in a cysteine cluster at the N-terminus which promotes membrane localization.

The protein localises to the cell membrane. The protein resides in the recycling endosome membrane. It localises to the cell projection. Its subcellular location is the dendritic spine. It is found in the postsynaptic density membrane. The catalysed reaction is S-hexadecanoyl-L-cysteinyl-[protein] + H2O = L-cysteinyl-[protein] + hexadecanoate + H(+). Hydrolyzes fatty acids from S-acylated cysteine residues in proteins. Has depalmitoylating activity towards nras. In Xenopus laevis (African clawed frog), this protein is Alpha/beta hydrolase domain-containing protein 17B.